The chain runs to 124 residues: Small ribosomal subunit protein uS12 (124 aa).

A disordered region spans residues 1–23 (MATINQLVRKPRVRQKQKSNVPA). Aspartate 89 bears the 3-methylthioaspartic acid mark. A disordered region spans residues 103–124 (DTAGVGDRRQGRSKYGAKRPKG). The segment covering 113–124 (GRSKYGAKRPKG) has biased composition (basic residues).

It belongs to the universal ribosomal protein uS12 family. As to quaternary structure, part of the 30S ribosomal subunit. Contacts proteins S8 and S17. May interact with IF1 in the 30S initiation complex.

Its function is as follows. With S4 and S5 plays an important role in translational accuracy. Functionally, interacts with and stabilizes bases of the 16S rRNA that are involved in tRNA selection in the A site and with the mRNA backbone. Located at the interface of the 30S and 50S subunits, it traverses the body of the 30S subunit contacting proteins on the other side and probably holding the rRNA structure together. The combined cluster of proteins S8, S12 and S17 appears to hold together the shoulder and platform of the 30S subunit. The chain is Small ribosomal subunit protein uS12 from Nitrosococcus oceani (strain ATCC 19707 / BCRC 17464 / JCM 30415 / NCIMB 11848 / C-107).